Here is a 150-residue protein sequence, read N- to C-terminus: Large ribosomal subunit protein bL9 (150 aa).

This sequence belongs to the bacterial ribosomal protein bL9 family.

Binds to the 23S rRNA. This chain is Large ribosomal subunit protein bL9, found in Janthinobacterium sp. (strain Marseille) (Minibacterium massiliensis).